A 358-amino-acid chain; its full sequence is Photosystem II protein D1 (358 aa).

3 helical membrane-spanning segments follow: residues 28 to 45 (YVGWFGVLMVPTLLAAAI), 117 to 132 (HFLIGICCWLGRQWEL), and 141 to 155 (WICVAYSAPLSAAFA). Histidine 117 contributes to the chlorophyll a binding site. Residue tryptophan 125 participates in pheophytin a binding. Residues aspartate 169 and glutamate 188 each contribute to the [CaMn4O5] cluster site. The chain crosses the membrane as a helical span at residues 196 to 217 (FHMIGVAGMFGGSLFSAMHGSL). A chlorophyll a-binding site is contributed by histidine 197. Residues histidine 214 and 263-264 (SF) contribute to the a quinone site. Position 214 (histidine 214) interacts with Fe cation. Position 271 (histidine 271) interacts with Fe cation. A helical transmembrane segment spans residues 273-287 (FLAAWPVICIWITSL). The [CaMn4O5] cluster site is built by histidine 331, glutamate 332, aspartate 341, and alanine 343. Positions 344-358 (AAESTPVALIAPAIG) are excised as a propeptide.

This sequence belongs to the reaction center PufL/M/PsbA/D family. As to quaternary structure, PSII is composed of 1 copy each of membrane proteins PsbA, PsbB, PsbC, PsbD, PsbE, PsbF, PsbH, PsbI, PsbJ, PsbK, PsbL, PsbM, PsbT, PsbX, PsbY, Psb30/Ycf12, peripheral proteins PsbO, CyanoQ (PsbQ), PsbU, PsbV and a large number of cofactors. It forms dimeric complexes. Requires The D1/D2 heterodimer binds P680, chlorophylls that are the primary electron donor of PSII, and subsequent electron acceptors. It shares a non-heme iron and each subunit binds pheophytin, quinone, additional chlorophylls, carotenoids and lipids. D1 provides most of the ligands for the Mn4-Ca-O5 cluster of the oxygen-evolving complex (OEC). There is also a Cl(-1) ion associated with D1 and D2, which is required for oxygen evolution. The PSII complex binds additional chlorophylls, carotenoids and specific lipids. as cofactor. In terms of processing, tyr-160 forms a radical intermediate that is referred to as redox-active TyrZ, YZ or Y-Z. C-terminally processed by CtpA; processing is essential to allow assembly of the oxygen-evolving complex and thus photosynthetic growth.

The protein resides in the cellular thylakoid membrane. It catalyses the reaction 2 a plastoquinone + 4 hnu + 2 H2O = 2 a plastoquinol + O2. Photosystem II (PSII) is a light-driven water:plastoquinone oxidoreductase that uses light energy to abstract electrons from H(2)O, generating O(2) and a proton gradient subsequently used for ATP formation. It consists of a core antenna complex that captures photons, and an electron transfer chain that converts photonic excitation into a charge separation. The D1/D2 (PsbA/PsbD) reaction center heterodimer binds P680, the primary electron donor of PSII as well as several subsequent electron acceptors. The polypeptide is Photosystem II protein D1 (Prochlorococcus marinus (strain MIT 9313)).